Here is a 1569-residue protein sequence, read N- to C-terminus: Zinc finger protein GLI3 (1569 aa).

Composition is skewed to polar residues over residues 1–10 (MEAQSRSTTA) and 416–432 (AAQQ…SSTG). Disordered stretches follow at residues 1-79 (MEAQ…STSS) and 414-461 (SEAA…DQPD). 5 C2H2-type zinc fingers span residues 485–510 (TNCH…NNDH), 518–545 (FVCR…MRRH), 551–575 (HKCT…LRSH), 581–606 (YVCE…NRTH), and 612–637 (YVCK…KTVH). Disordered regions lie at residues 625–731 (DPSS…YTNS), 899–921 (SYDP…DGLP), 1202–1228 (PKSG…QNLD), and 1335–1364 (SNQT…GEQQ). The span at 637 to 653 (HGPEAHVTKKQRGDIHP) shows a compositional bias: basic and acidic residues. Polar residues predominate over residues 663-676 (SHSQSRSPGQQTQG). Residues 678–704 (HGEHKDLSNTTSKHEECLQVRSVKTEK) are compositionally biased toward basic and acidic residues. Residues 705–731 (PMSSQPSPGGKSSCSRQQSPISNYTNS) are compositionally biased toward polar residues. The segment covering 1335–1350 (SNQTTSGQNGNTTDGT) has biased composition (low complexity). Over residues 1352 to 1364 (SFLSTTQNGGEQQ) the composition is skewed to polar residues.

It belongs to the GLI C2H2-type zinc-finger protein family. Post-translationally, phosphorylation is essential for its proteolytic processing. In terms of processing, the repressor form (GLI3R), a C-terminally truncated form is generated from the full-length GLI3 protein (GLI3FL) through proteolytic processing.

The protein localises to the nucleus. It localises to the cytoplasm. In terms of biological role, has a dual function as a transcriptional activator and a repressor of the sonic hedgehog (Shh) pathway, and may play a role in limb development. May bind to the minimal GLI-consensus sequence 5'-GGGTGGTC-3'. Has an essential role in the early embryonic patterning of mesoderm and neuroectoderm. In Xenopus laevis (African clawed frog), this protein is Zinc finger protein GLI3 (gli3).